A 361-amino-acid chain; its full sequence is Uroporphyrinogen decarboxylase (361 aa).

Substrate contacts are provided by residues 27–31 (RQAGR), D77, Y154, T209, and H327.

The protein belongs to the uroporphyrinogen decarboxylase family. As to quaternary structure, homodimer.

Its subcellular location is the cytoplasm. It catalyses the reaction uroporphyrinogen III + 4 H(+) = coproporphyrinogen III + 4 CO2. Its pathway is porphyrin-containing compound metabolism; protoporphyrin-IX biosynthesis; coproporphyrinogen-III from 5-aminolevulinate: step 4/4. Catalyzes the decarboxylation of four acetate groups of uroporphyrinogen-III to yield coproporphyrinogen-III. This Coxiella burnetii (strain Dugway 5J108-111) protein is Uroporphyrinogen decarboxylase.